The sequence spans 1215 residues: Pesticidal crystal protein Cry1Ka (1215 aa).

It belongs to the delta endotoxin family.

Promotes colloidosmotic lysis by binding to the midgut epithelial cells of insects. Selectively toxic to Artogeia rapae but not active on Plutella xylostella. In Bacillus thuringiensis subsp. morrisoni, this protein is Pesticidal crystal protein Cry1Ka (cry1Ka).